The sequence spans 427 residues: Anhydro-N-acetylmuramic acid kinase (427 aa).

Position 32-39 (Gly32–Asp39) interacts with ATP.

Belongs to the anhydro-N-acetylmuramic acid kinase family.

The catalysed reaction is 1,6-anhydro-N-acetyl-beta-muramate + ATP + H2O = N-acetyl-D-muramate 6-phosphate + ADP + H(+). The protein operates within amino-sugar metabolism; 1,6-anhydro-N-acetylmuramate degradation. Its pathway is cell wall biogenesis; peptidoglycan recycling. Catalyzes the specific phosphorylation of 1,6-anhydro-N-acetylmuramic acid (anhMurNAc) with the simultaneous cleavage of the 1,6-anhydro ring, generating MurNAc-6-P. Is required for the utilization of anhMurNAc either imported from the medium or derived from its own cell wall murein, and thus plays a role in cell wall recycling. In Psychrobacter cryohalolentis (strain ATCC BAA-1226 / DSM 17306 / VKM B-2378 / K5), this protein is Anhydro-N-acetylmuramic acid kinase.